The chain runs to 152 residues: Protein SprT-like (152 aa).

Positions 7 to 148 (QRLVEEVSLQ…GKCKGKLILI (142 aa)) constitute a SprT-like domain. Residue H67 coordinates Zn(2+). Residue E68 is part of the active site. H71 contacts Zn(2+).

It belongs to the SprT family. Zn(2+) is required as a cofactor.

Its subcellular location is the cytoplasm. The sequence is that of Protein SprT-like from Bacillus cereus (strain AH187).